A 182-amino-acid polypeptide reads, in one-letter code: Probable RNA 2'-phosphotransferase (182 aa).

Belongs to the KptA/TPT1 family.

Removes the 2'-phosphate from RNA via an intermediate in which the phosphate is ADP-ribosylated by NAD followed by a presumed transesterification to release the RNA and generate ADP-ribose 1''-2''-cyclic phosphate (APPR&gt;P). May function as an ADP-ribosylase. This is Probable RNA 2'-phosphotransferase from Flavobacterium johnsoniae (strain ATCC 17061 / DSM 2064 / JCM 8514 / BCRC 14874 / CCUG 350202 / NBRC 14942 / NCIMB 11054 / UW101) (Cytophaga johnsonae).